We begin with the raw amino-acid sequence, 250 residues long: DSC E3 ubiquitin ligase complex subunit 3 (250 aa).

A disordered region spans residues 105–130 (LASQDQAQSGLNSNSESPDDLQNAQT). The span at 107–130 (SQDQAQSGLNSNSESPDDLQNAQT) shows a compositional bias: polar residues. Asn187 carries an N-linked (GlcNAc...) asparagine glycan. A run of 2 helical transmembrane segments spans residues 199–219 (TLLA…YFLW) and 228–248 (MQLS…LHSY).

The protein belongs to the dsc3 family. In terms of assembly, component of the DSC E3 ubiquitin ligase complex composed of dsc1, dsc2, dsc3 and dsc4.

The protein localises to the endoplasmic reticulum membrane. The protein resides in the golgi apparatus membrane. It participates in protein modification; protein ubiquitination. Its function is as follows. Component of the DSC E3 ubiquitin ligase complex which is required for the sre1 transcriptional activator proteolytic cleavage to release the soluble transcription factor from the membrane in low oxygen or sterol conditions. The complex also plays an important role in the multivesicular body (MVB) pathway and functions in a post-endoplasmic reticulum pathway for protein degradation. In Schizosaccharomyces pombe (strain 972 / ATCC 24843) (Fission yeast), this protein is DSC E3 ubiquitin ligase complex subunit 3 (dsc3).